We begin with the raw amino-acid sequence, 445 residues long: UDP-N-acetylglucosamine--peptide N-acetylglucosaminyltransferase stabilizing protein GtfB (445 aa).

The tract at residues Lys-55–Phe-171 is glycosyltransferase 1.

This sequence belongs to the GtfB family. As to quaternary structure, interacts with glycosyltransferase GtfA; probably forms a heterotetramer with 2 subunits each of GtfA and GtfB. Part of the accessory SecA2/SecY2 protein translocation apparatus.

It is found in the cell membrane. It functions in the pathway protein modification; protein glycosylation. Its function is as follows. Required for the polymorphic O-glycosylation of the serine-rich repeat protein PsrP. A stabilizing protein that is part of the accessory SecA2/SecY2 system specifically required to export serine-rich repeat cell wall proteins encoded upstream in the same operon. The GtfA-GtfB complex adds GlcNAc from UDP-GlcNAc to PsrP, attaching the first sugar residue. Stabilizes the glycosylation activity of GtfA. Has no N-acetylglucosaminyl transferase activity on its own. This chain is UDP-N-acetylglucosamine--peptide N-acetylglucosaminyltransferase stabilizing protein GtfB, found in Streptococcus pneumoniae serotype 4 (strain ATCC BAA-334 / TIGR4).